The following is a 463-amino-acid chain: Elongation factor 1-alpha 1 (463 aa).

The 238-residue stretch at K5 to T242 folds into the tr-type G domain. Residues G14 to S21 form a G1 region. G14 to S21 serves as a coordination point for GTP. Residues G70–D74 are G2. Positions D91 to G94 are G3. Residues D91–H95 and N153–D156 each bind GTP. The tract at residues N153–D156 is G4. The tract at residues S194–W196 is G5. A 5-glutamyl glycerylphosphorylethanolamine mark is found at E301 and E374.

The protein belongs to the TRAFAC class translation factor GTPase superfamily. Classic translation factor GTPase family. EF-Tu/EF-1A subfamily.

It localises to the cytoplasm. In terms of biological role, this protein promotes the GTP-dependent binding of aminoacyl-tRNA to the A-site of ribosomes during protein biosynthesis. The protein is Elongation factor 1-alpha 1 of Drosophila melanogaster (Fruit fly).